The sequence spans 1386 residues: DNA-directed RNA polymerase subunit beta'' (1386 aa).

Zn(2+)-binding residues include C220, C291, C298, and C301.

This sequence belongs to the RNA polymerase beta' chain family. RpoC2 subfamily. In terms of assembly, in plastids the minimal PEP RNA polymerase catalytic core is composed of four subunits: alpha, beta, beta', and beta''. When a (nuclear-encoded) sigma factor is associated with the core the holoenzyme is formed, which can initiate transcription. It depends on Zn(2+) as a cofactor.

It is found in the plastid. It localises to the chloroplast. It carries out the reaction RNA(n) + a ribonucleoside 5'-triphosphate = RNA(n+1) + diphosphate. DNA-dependent RNA polymerase catalyzes the transcription of DNA into RNA using the four ribonucleoside triphosphates as substrates. The protein is DNA-directed RNA polymerase subunit beta'' of Glycine max (Soybean).